The following is a 395-amino-acid chain: RNA demethylase ALKBH5 (395 aa).

Disordered stretches follow at residues methionine 1–arginine 28 and alanine 47–alanine 83. Alanine 2 carries the post-translational modification N-acetylalanine. Residue lysine 58 forms a Glycyl lysine isopeptide (Lys-Gly) (interchain with G-Cter in ubiquitin) linkage. Positions lysine 60–alanine 83 are enriched in basic and acidic residues. Phosphoserine occurs at positions 65 and 70. The stretch at glutamate 68 to lysine 117 forms a coiled coil. Tyrosine 72 bears the Phosphotyrosine mark. A Glycyl lysine isopeptide (Lys-Gly) (interchain with G-Cter in SUMO1) cross-link involves residue lysine 87. Phosphoserine is present on serine 88. Lysine 133 carries the N6-acetyllysine modification. Tyrosine 140 is a catalytic residue. The 2-oxoglutarate site is built by asparagine 194, tyrosine 196, and histidine 205. A disulfide bond links cysteine 231 and cysteine 268. At lysine 236 the chain carries N6-acetyllysine. 2-oxoglutarate contacts are provided by histidine 267 and arginine 278. Residues glutamate 294 to histidine 395 form a disordered region. Positions lysine 296 to serine 306 are enriched in low complexity. Lysine 322 is covalently cross-linked (Glycyl lysine isopeptide (Lys-Gly) (interchain with G-Cter in SUMO1)). Serine 326 is modified (phosphoserine). Residue lysine 329 forms a Glycyl lysine isopeptide (Lys-Gly) (interchain with G-Cter in SUMO2) linkage. Over residues lysine 329 to arginine 350 the composition is skewed to basic and acidic residues. An Omega-N-methylarginine modification is found at arginine 360. Phosphoserine is present on residues serine 362, serine 372, serine 375, and serine 385.

The protein belongs to the alkB family. Monomer. Interacts with RBM33; promoting desumoylation by SENP1 and recruitment to N(6)-methyladenosine-containing mRNAs. Interacts (when acetylated by KAT8) with PSPC1; interaction facilitates recognition of N(6)-methyladenosine (m6A) mRNA. Requires Fe(2+) as cofactor. In terms of processing, phosphorylated at Ser-88 and Ser-326 in response to reactive oxygen species (ROS), promoting sumoylation and inactivation. Acetylated by KAT8 at Lys-236, promoting interaction with PSPC1, thereby facilitating recognition of N(6)-methyladenosine (m6A) mRNA by ALKBH5. Deacetylated at Lys-236 by HDAC7. Post-translationally, sumoylated at Lys-87 and Lys-322 by PIAS4 following phosphorylation at Ser-88 and Ser-326 in response to reactive oxygen species (ROS), inhibiting the RNA demethylase activity. Desumoylated by SENP1; relieving RNA demethylase inhibition, leading to N(6)-methyladenosine-containing mRNAs demethylation. In terms of processing, ubiquitinated at Lys-58 via 'Lys-48'-linked polyubiquitin chain, leading to its degradation by the proteasome. Deubiquitinated at Lys-58 by USP9X, promoting its stabilizazion. As to expression, widely expressed, with highest expression in testis. In testis, present in almost all testicular cell types except elongating and elongated spermatids (at protein level). Among spermatogenic cells, present at high level in spermatocytes; medium levels in spermatogonia and lower levels in round spermatids (at protein level).

It localises to the nucleus speckle. The enzyme catalyses an N(6)-methyladenosine in mRNA + 2-oxoglutarate + O2 = an adenosine in mRNA + formaldehyde + succinate + CO2. With respect to regulation, RNA demethylase activity is inhibited following sumoylation. Inhibition is relieved following desumoylation. Inhibited by histone demethylase inhibitor IOX1. Its function is as follows. Dioxygenase that specifically demethylates N(6)-methyladenosine (m6A) RNA, the most prevalent internal modification of messenger RNA (mRNA) in higher eukaryotes. Demethylates RNA by oxidative demethylation, which requires molecular oxygen, alpha-ketoglutarate and iron. Demethylation of m6A mRNA affects mRNA processing, translation and export. Can also demethylate N(6)-methyladenosine in single-stranded DNA (in vitro). Required for the late meiotic and haploid phases of spermatogenesis by mediating m6A demethylation in spermatocytes and round spermatids: m6A demethylation of target transcripts is required for correct splicing and the production of longer 3'-UTR mRNAs in male germ cells. Involved in paraspeckle assembly, a nuclear membraneless organelle, by undergoing liquid-liquid phase separation. Paraspeckle assembly is coupled with m6A demethylation of RNAs, such as NEAT1 non-coding RNA. Also acts as a negative regulator of T-cell development: inhibits gamma-delta T-cell proliferation via demethylation of JAG1 and NOTCH2 transcripts. Inhibits regulatory T-cell (Treg) recruitment by mediating demethylation and destabilization of CCL28 mRNAs. The sequence is that of RNA demethylase ALKBH5 from Mus musculus (Mouse).